A 99-amino-acid polypeptide reads, in one-letter code: Beta-2-microglobulin (99 aa).

Residues 5–92 form the Ig-like C1-type domain; that stretch reads PNVQVYSRHP…KHVTLKEPMT (88 aa). A disulfide bond links C25 and C80.

This sequence belongs to the beta-2-microglobulin family. Heterodimer of an alpha chain and a beta chain. Beta-2-microglobulin is the beta-chain of major histocompatibility complex class I molecules.

It localises to the secreted. Functionally, component of the class I major histocompatibility complex (MHC). Involved in the presentation of peptide antigens to the immune system. The sequence is that of Beta-2-microglobulin (B2M) from Oryctolagus cuniculus (Rabbit).